Consider the following 254-residue polypeptide: Alcohol dehydrogenase (254 aa).

10-33 (FVAGLGGIGLDTSREIVKSGPKNL) serves as a coordination point for NAD(+). Ser-138 lines the substrate pocket. The active-site Proton acceptor is Tyr-151.

It belongs to the short-chain dehydrogenases/reductases (SDR) family. Homodimer.

The catalysed reaction is a primary alcohol + NAD(+) = an aldehyde + NADH + H(+). It carries out the reaction a secondary alcohol + NAD(+) = a ketone + NADH + H(+). The chain is Alcohol dehydrogenase (Adh1) from Drosophila lacicola (Fruit fly).